The chain runs to 502 residues: Cytochrome P450 83A1 (502 aa).

The helical transmembrane segment at 1–21 (MEDIIIGVVALAAVLLFFLYQ) threads the bilayer. Cys442 serves as a coordination point for heme.

Belongs to the cytochrome P450 family. Heme is required as a cofactor.

The protein resides in the endoplasmic reticulum membrane. It catalyses the reaction an (E)-omega-(methylsulfanyl)-alkanal oxime + glutathione + reduced [NADPH--hemoprotein reductase] + O2 = an S-[(1E)-1-(hydroxyimino)-omega-(methylsulfanyl)alkyl]-L-glutathione + oxidized [NADPH--hemoprotein reductase] + 2 H2O + H(+). Functionally, involved in the metabolism of aliphatic and aromatic oximes. Involved in the biosynthesis of both short-chain and long-chain aliphatic glucosinolates. The chain is Cytochrome P450 83A1 (CYP83A1) from Arabidopsis thaliana (Mouse-ear cress).